The sequence spans 434 residues: Glutamyl-tRNA reductase (434 aa).

Substrate is bound by residues Thr-49–Arg-52, Ser-109, Glu-114–Gln-116, and Gln-120. Catalysis depends on Cys-50, which acts as the Nucleophile. Gly-189–Cys-194 provides a ligand contact to NADP(+).

It belongs to the glutamyl-tRNA reductase family. In terms of assembly, homodimer.

The enzyme catalyses (S)-4-amino-5-oxopentanoate + tRNA(Glu) + NADP(+) = L-glutamyl-tRNA(Glu) + NADPH + H(+). Its pathway is porphyrin-containing compound metabolism; protoporphyrin-IX biosynthesis; 5-aminolevulinate from L-glutamyl-tRNA(Glu): step 1/2. Its function is as follows. Catalyzes the NADPH-dependent reduction of glutamyl-tRNA(Glu) to glutamate 1-semialdehyde (GSA). The polypeptide is Glutamyl-tRNA reductase (Geobacter sulfurreducens (strain ATCC 51573 / DSM 12127 / PCA)).